A 293-amino-acid polypeptide reads, in one-letter code: Ribulose bisphosphate carboxylase/oxygenase activase, chloroplastic (293 aa).

75–82 (PGTGKTTV) provides a ligand contact to ATP.

Belongs to the CbxX/CfxQ family. As to quaternary structure, forms homooligomers. Forms heterohexameric rings with the nuclear-encoded Rca subunit consisting of 3 of each nuclear- and plastidial-encoded subunits that alternate in the ring.

The protein localises to the plastid. Its subcellular location is the chloroplast. Functionally, required for the expression of ribulose 1,5-bisphosphate carboxylase/oxygenase (RuBisCo). ATPase involved in the activation of red-type RuBisCo, which tends to form inactive complexes with its substrate ribulose 1,5-bisphosphate (RuBP). Catalyzes the release of RuBP from inhibited RuBisCo in an ATP-dependent manner. Activation of RuBisCO involves the ATP-dependent carboxylation of the epsilon-amino group of lysine leading to a carbamate structure. The nuclear-encoded subunit plays a more critical role in activase function than the plastidial-encoded subunit. This is Ribulose bisphosphate carboxylase/oxygenase activase, chloroplastic from Cyanidioschyzon merolae (strain NIES-3377 / 10D) (Unicellular red alga).